A 606-amino-acid chain; its full sequence is Mitogen-activated protein kinase 20 (606 aa).

Residues 25–316 form the Protein kinase domain; it reads FKVQEVIGKG…AEEALADPYF (292 aa). ATP is bound by residues 31–39 and Lys-54; that span reads IGKGSYGVV. Asp-151 serves as the catalytic Proton acceptor. Thr-187 bears the Phosphothreonine mark. A TXY motif is present at residues 187–189; the sequence is TDY. Tyr-189 bears the Phosphotyrosine mark. Residue Thr-192 is modified to Phosphothreonine.

Belongs to the protein kinase superfamily. CMGC Ser/Thr protein kinase family. MAP kinase subfamily. Dually phosphorylated on Thr-187 and Tyr-189, which activates the enzyme.

It catalyses the reaction L-seryl-[protein] + ATP = O-phospho-L-seryl-[protein] + ADP + H(+). The catalysed reaction is L-threonyl-[protein] + ATP = O-phospho-L-threonyl-[protein] + ADP + H(+). With respect to regulation, activated by threonine and tyrosine phosphorylation. This chain is Mitogen-activated protein kinase 20 (MPK20), found in Arabidopsis thaliana (Mouse-ear cress).